A 130-amino-acid chain; its full sequence is Guanylate kinase (130 aa).

The Guanylate kinase-like domain maps to 1-130; sequence KIFEDPTTSY…EKIQSRVNEA (130 aa).

It belongs to the guanylate kinase family.

Its subcellular location is the cytoplasm. It carries out the reaction GMP + ATP = GDP + ADP. Its function is as follows. Essential for recycling GMP and indirectly, cGMP. This chain is Guanylate kinase (gmk), found in Staphylococcus epidermidis.